Consider the following 263-residue polypeptide: Putative TATA-binding protein pB263R (263 aa).

The protein belongs to the asfivirus B263R family.

In terms of biological role, putative TATA-binding protein. The chain is Putative TATA-binding protein pB263R from African swine fever virus (isolate Warthog/Namibia/Wart80/1980) (ASFV).